We begin with the raw amino-acid sequence, 179 residues long: X-linked lymphocyte-regulated protein 5C (179 aa).

Over residues 1 to 11 (MSNKEQKDMKK) the composition is skewed to basic and acidic residues. The segment at 1–75 (MSNKEQKDMK…MQDFKGDDGT (75 aa)) is disordered. The span at 42–53 (GTSGMGSHSSGS) shows a compositional bias: low complexity. Positions 56 to 75 (QEAREPVQKKMQDFKGDDGT) are enriched in basic and acidic residues. Residues 146-175 (ITQQQMKILQTAIEDHETKLKNAKDMCDTF) adopt a coiled-coil conformation.

Belongs to the XLR/SYCP3 family. Expressed in testis (at protein level). Also expressed in ovary. Not detected in other tissues tested.

The protein resides in the nucleus. The protein localises to the chromosome. The protein is X-linked lymphocyte-regulated protein 5C of Mus musculus (Mouse).